A 299-amino-acid polypeptide reads, in one-letter code: Ribosomal protein L11 methyltransferase (299 aa).

S-adenosyl-L-methionine contacts are provided by T152, G172, D194, and N234.

The protein belongs to the methyltransferase superfamily. PrmA family.

Its subcellular location is the cytoplasm. The enzyme catalyses L-lysyl-[protein] + 3 S-adenosyl-L-methionine = N(6),N(6),N(6)-trimethyl-L-lysyl-[protein] + 3 S-adenosyl-L-homocysteine + 3 H(+). In terms of biological role, methylates ribosomal protein L11. In Geobacter metallireducens (strain ATCC 53774 / DSM 7210 / GS-15), this protein is Ribosomal protein L11 methyltransferase.